The primary structure comprises 363 residues: Probable L-tyrosine/L-aspartate decarboxylase (363 aa).

Lys-224 bears the N6-(pyridoxal phosphate)lysine mark.

The protein belongs to the group II decarboxylase family. MfnA subfamily. The cofactor is pyridoxal 5'-phosphate.

It catalyses the reaction L-tyrosine + H(+) = tyramine + CO2. The enzyme catalyses L-aspartate + H(+) = beta-alanine + CO2. It participates in cofactor biosynthesis; methanofuran biosynthesis. It functions in the pathway cofactor biosynthesis; coenzyme A biosynthesis. Catalyzes the decarboxylation of L-tyrosine to produce tyramine for methanofuran biosynthesis. Can also catalyze the decarboxylation of L-aspartate to produce beta-alanine for coenzyme A (CoA) biosynthesis. The sequence is that of Probable L-tyrosine/L-aspartate decarboxylase from Methanosphaerula palustris (strain ATCC BAA-1556 / DSM 19958 / E1-9c).